Reading from the N-terminus, the 1070-residue chain is MLRDGNEGMSTIPGFNQIQFEGFWRFIDQGLTEELSKFPKMEDTDQEIEFQLFVETYQLAEPLIKEKDAVYESLTYSSELYVSAGLIWKTRREMQEQTILIGNIPLMNSLGTFIVNGIYRIVINQILQSPGIYYRSELDHNGISVYTGTIISDWGGRSELEIDRKARIWARVSRKQKISILVLSSAMGSNLREILDNVCYPEIFLSFLNDKEKKKIGSKENAILEFYQQFACVGGDPVFSESLCKDLQKKFFQQRCELGRIGRRNMNRRLNLDIPENNTFLLPRDILAAADHLIGMKFGMGTLDDMNHLKHKRIRSVADLLQDQFGLALVRLENVVRGTISGAIRHKLIPTPQNLVTSTPLTTTFESFFGLHPLSQVLDRTNPLTQIVHGRKLSYLGPGGLTGRTASFRIRDIHPSHYGRICPIDTSEGINVGLIGSLAIHARIGPWGSLESPYYEISERSKRVQMLYLSPSRDEYYMLASGNSLALNQGIQEEQVVPARYRQEFLTIAWEQVHFRSIFSFQYFSIGASLIPFIEHNDANRALMSSNMQRQAVPLSQSEKCIVGTGLERQVALDSGVLAIAEHEGKIIYTNTDKIVLLGNGNTVSIPLVMYQRSNKNTCMHQKPQIPRGKCVKKGQILADGAATVGGELALGKNVLVAYMPWEGYNFEDAVLISERLVYEDIYTSFHIRKYEIQTYVTSQGPEKVTSEIPHLEAHLLRNLDKNGIVRLGSWVETGDILVGKLTPQMAKESSYAPEDRLLRAILGIQVSTSKETCLKLPIGGRGRVIDVRWIQKKGGSSYNPETIHVYISQKREIKVGDKVAGRHGNKGIISRILLRQDMPYLQDGRPVDMIFNPLGVPSRMNVGQIFECSLGLAGSLLDRHYRIAPFDERYEQEASRKLVFSELYEASKQTANPWVFEPEYPGKSRIFDGRTGDPFEQPVIIGNPYILKLIHQVDDKIHGRSSGHYALVTQQPLRGRAKQGGQRVGEMEVWALEGFGVAHILQEMLTYKSDHIKARQEVLGTTIIGGTIPNPEDAPESFRLLVRELRSLALELNHFLVSERNFQINRMEA.

This sequence belongs to the RNA polymerase beta chain family. In plastids the minimal PEP RNA polymerase catalytic core is composed of four subunits: alpha, beta, beta', and beta''. When a (nuclear-encoded) sigma factor is associated with the core the holoenzyme is formed, which can initiate transcription.

The protein localises to the plastid. It localises to the chloroplast. The catalysed reaction is RNA(n) + a ribonucleoside 5'-triphosphate = RNA(n+1) + diphosphate. Its function is as follows. DNA-dependent RNA polymerase catalyzes the transcription of DNA into RNA using the four ribonucleoside triphosphates as substrates. The chain is DNA-directed RNA polymerase subunit beta from Spinacia oleracea (Spinach).